Here is a 21-residue protein sequence, read N- to C-terminus: 20 kDa chaperonin, chloroplastic (21 aa).

It belongs to the GroES chaperonin family. Forms stable complexes with CPN60 in the presence of ATP.

The protein localises to the plastid. Its subcellular location is the chloroplast. Its function is as follows. Seems to function only as a co-chaperone, along with cpn60, and in certain cases is essential for the discharge of biologically active proteins from cpn60. This is 20 kDa chaperonin, chloroplastic (CPN21) from Pisum sativum (Garden pea).